The primary structure comprises 430 residues: Phosphomethylpyrimidine synthase 2 (430 aa).

Substrate-binding positions include N66, M95, Y124, H164, 186–188, 227–230, and E266; these read SRG and DGFR. H270 contacts Zn(2+). Y293 is a binding site for substrate. Residue H334 coordinates Zn(2+). [4Fe-4S] cluster is bound by residues C411, C414, and C418.

The protein belongs to the ThiC family. Homodimer. [4Fe-4S] cluster serves as cofactor.

It catalyses the reaction 5-amino-1-(5-phospho-beta-D-ribosyl)imidazole + S-adenosyl-L-methionine = 4-amino-2-methyl-5-(phosphooxymethyl)pyrimidine + CO + 5'-deoxyadenosine + formate + L-methionine + 3 H(+). It participates in cofactor biosynthesis; thiamine diphosphate biosynthesis. Functionally, catalyzes the synthesis of the hydroxymethylpyrimidine phosphate (HMP-P) moiety of thiamine from aminoimidazole ribotide (AIR) in a radical S-adenosyl-L-methionine (SAM)-dependent reaction. The protein is Phosphomethylpyrimidine synthase 2 of Syntrophotalea carbinolica (strain DSM 2380 / NBRC 103641 / GraBd1) (Pelobacter carbinolicus).